The primary structure comprises 159 residues: Ribosome maturation factor RimP (159 aa).

The protein belongs to the RimP family.

The protein resides in the cytoplasm. In terms of biological role, required for maturation of 30S ribosomal subunits. The protein is Ribosome maturation factor RimP of Halothermothrix orenii (strain H 168 / OCM 544 / DSM 9562).